Reading from the N-terminus, the 106-residue chain is Small ribosomal subunit protein uS10 (106 aa).

The protein belongs to the universal ribosomal protein uS10 family. In terms of assembly, part of the 30S ribosomal subunit.

Involved in the binding of tRNA to the ribosomes. This is Small ribosomal subunit protein uS10 from Prochlorococcus marinus (strain MIT 9211).